The sequence spans 263 residues: 3-deoxy-manno-octulosonate cytidylyltransferase (263 aa).

It belongs to the KdsB family.

The protein localises to the cytoplasm. The catalysed reaction is 3-deoxy-alpha-D-manno-oct-2-ulosonate + CTP = CMP-3-deoxy-beta-D-manno-octulosonate + diphosphate. The protein operates within nucleotide-sugar biosynthesis; CMP-3-deoxy-D-manno-octulosonate biosynthesis; CMP-3-deoxy-D-manno-octulosonate from 3-deoxy-D-manno-octulosonate and CTP: step 1/1. It functions in the pathway bacterial outer membrane biogenesis; lipopolysaccharide biosynthesis. Activates KDO (a required 8-carbon sugar) for incorporation into bacterial lipopolysaccharide in Gram-negative bacteria. This chain is 3-deoxy-manno-octulosonate cytidylyltransferase, found in Burkholderia mallei (strain NCTC 10229).